The chain runs to 281 residues: tRNA uridine(34) hydroxylase (281 aa).

The Rhodanese domain occupies 125 to 222 (AREDVKTIDT…YFLKTKNKDG (98 aa)). Cys-182 acts as the Cysteine persulfide intermediate in catalysis.

This sequence belongs to the TrhO family.

It carries out the reaction uridine(34) in tRNA + AH2 + O2 = 5-hydroxyuridine(34) in tRNA + A + H2O. Catalyzes oxygen-dependent 5-hydroxyuridine (ho5U) modification at position 34 in tRNAs. The chain is tRNA uridine(34) hydroxylase from Neorickettsia sennetsu (strain ATCC VR-367 / Miyayama) (Ehrlichia sennetsu).